The chain runs to 498 residues: MSGYILAIDQGTTSTRSMLFDRNMRVVGLGQQEFTQHFPSSGWVEHDAEEIWKSVQSTIRIALAQAGISAADVAAIGITNQRETTVVWDRISGKPVHRAIVWQDRRTAQFCDELKRRNLEPLFTEKTGLLLDPYFSGTKLAWLLNHVPGLRERAQKGQVCFGTIDSWLIYKLTGGKAHVTDATNASRTLIYHIGENRWDDELLDILGIPAAMLPEVKDCAADFGMTDPALFGVSIPILGVAGDQQTAVIGNACFEPGMMKSTYGTGCFALLNTGTDRVTSSNRLLTTIAYRLDGVTTYALEGSIFIAGAAVQWLRDEMGFISVVSEVSALAEKADPNQRIYLVPAFTGLGAPYWDAEARGAIFGLTRGTGRAEFARAALESVAYQTFDLLEAMQGDWKGATNHTVLRVDGGMVASDWTMQRLADILNAPVDRPVFLETTVLGAAWLAASRAGIWPDRKGFSERWQRDCRFEPAMPEKERESAIAGWRDSVSRCLTRPQ.

Threonine 12 is an ADP binding site. Positions 12, 13, and 14 each coordinate ATP. Sn-glycerol 3-phosphate is bound at residue threonine 12. Position 16 (arginine 16) interacts with ADP. Sn-glycerol 3-phosphate contacts are provided by arginine 82, glutamate 83, tyrosine 134, and aspartate 243. Glycerol contacts are provided by arginine 82, glutamate 83, tyrosine 134, aspartate 243, and glutamine 244. ADP-binding residues include threonine 265 and glycine 308. The ATP site is built by threonine 265, glycine 308, glutamine 312, and glycine 411. Glycine 411 contributes to the ADP binding site.

The protein belongs to the FGGY kinase family.

It carries out the reaction glycerol + ATP = sn-glycerol 3-phosphate + ADP + H(+). It participates in polyol metabolism; glycerol degradation via glycerol kinase pathway; sn-glycerol 3-phosphate from glycerol: step 1/1. Its activity is regulated as follows. Inhibited by fructose 1,6-bisphosphate (FBP). Functionally, key enzyme in the regulation of glycerol uptake and metabolism. Catalyzes the phosphorylation of glycerol to yield sn-glycerol 3-phosphate. In Brucella suis biovar 1 (strain 1330), this protein is Glycerol kinase.